The following is a 396-amino-acid chain: NADH-quinone oxidoreductase subunit D (396 aa).

Belongs to the complex I 49 kDa subunit family. In terms of assembly, NDH-1 is composed of 14 different subunits. Subunits NuoB, C, D, E, F, and G constitute the peripheral sector of the complex.

It is found in the cell inner membrane. The catalysed reaction is a quinone + NADH + 5 H(+)(in) = a quinol + NAD(+) + 4 H(+)(out). In terms of biological role, NDH-1 shuttles electrons from NADH, via FMN and iron-sulfur (Fe-S) centers, to quinones in the respiratory chain. The immediate electron acceptor for the enzyme in this species is believed to be ubiquinone. Couples the redox reaction to proton translocation (for every two electrons transferred, four hydrogen ions are translocated across the cytoplasmic membrane), and thus conserves the redox energy in a proton gradient. The chain is NADH-quinone oxidoreductase subunit D from Bartonella henselae (strain ATCC 49882 / DSM 28221 / CCUG 30454 / Houston 1) (Rochalimaea henselae).